The sequence spans 1465 residues: Transcriptional elongation regulator MINIYO (1465 aa).

Disordered stretches follow at residues 27–85 (KGIS…AEER), 186–211 (LNAS…ESDI), and 1113–1135 (TIHE…SSTI).

Belongs to the RPAP1 family. Interacts with HAG3, NRPB3 and NRPB10L. As to expression, expressed in root and shoot apices and in leaf and flower primordia. Detected in the endosperm, embryo, meristems and in organ primordia, but not in mature cells. Found exclusively in the vascular bundles in mature leaves.

It is found in the cytoplasm. It localises to the nucleus. Positive regulator of transcriptional elongation that is essential for cells to initiate differentiation. Interacts with RNA polymerase II and the Elongator complex and is required to sustain global levels of transcriptional elongation activity, specifically in differentiating tissues. The sequence is that of Transcriptional elongation regulator MINIYO from Arabidopsis thaliana (Mouse-ear cress).